A 443-amino-acid chain; its full sequence is ATP-dependent protease ATPase subunit HslU (443 aa).

ATP-binding positions include isoleucine 18, glycine 60 to glutamate 65, aspartate 256, glutamate 321, and arginine 393.

The protein belongs to the ClpX chaperone family. HslU subfamily. As to quaternary structure, a double ring-shaped homohexamer of HslV is capped on each side by a ring-shaped HslU homohexamer. The assembly of the HslU/HslV complex is dependent on binding of ATP.

It is found in the cytoplasm. Its function is as follows. ATPase subunit of a proteasome-like degradation complex; this subunit has chaperone activity. The binding of ATP and its subsequent hydrolysis by HslU are essential for unfolding of protein substrates subsequently hydrolyzed by HslV. HslU recognizes the N-terminal part of its protein substrates and unfolds these before they are guided to HslV for hydrolysis. The protein is ATP-dependent protease ATPase subunit HslU of Escherichia fergusonii (strain ATCC 35469 / DSM 13698 / CCUG 18766 / IAM 14443 / JCM 21226 / LMG 7866 / NBRC 102419 / NCTC 12128 / CDC 0568-73).